The primary structure comprises 197 residues: Large ribosomal subunit protein bL17 (197 aa).

Residues 120–197 (DVPPADTGQG…EEEESEEDNT (78 aa)) form a disordered region. The span at 127 to 136 (GQGGSGGTRR) shows a compositional bias: gly residues. Residues 159-197 (SSDEESESVEEDEATAEEASADAEQGEAEEEEESEEDNT) are compositionally biased toward acidic residues.

The protein belongs to the bacterial ribosomal protein bL17 family. In terms of assembly, part of the 50S ribosomal subunit. Contacts protein L32.

In Salinibacter ruber (strain DSM 13855 / M31), this protein is Large ribosomal subunit protein bL17.